The chain runs to 99 residues: Small ribosomal subunit protein bS16 (99 aa).

Residues 80-99 (PPRQQNEAKRETAETAQPEA) are disordered.

This sequence belongs to the bacterial ribosomal protein bS16 family.

This Thermomicrobium roseum (strain ATCC 27502 / DSM 5159 / P-2) protein is Small ribosomal subunit protein bS16.